Consider the following 647-residue polypeptide: DNA ligase (647 aa).

NAD(+)-binding positions include 30-34 (DEEYD), 79-80 (SM), and glutamate 106. The active-site N6-AMP-lysine intermediate is lysine 108. Arginine 129, glutamate 163, and lysine 301 together coordinate NAD(+). 4 residues coordinate Zn(2+): cysteine 395, cysteine 398, cysteine 411, and cysteine 416. In terms of domain architecture, BRCT spans 569–647 (SISNALSGKT…SEYERLKLEV (79 aa)).

Belongs to the NAD-dependent DNA ligase family. LigA subfamily. Requires Mg(2+) as cofactor. Mn(2+) serves as cofactor.

It carries out the reaction NAD(+) + (deoxyribonucleotide)n-3'-hydroxyl + 5'-phospho-(deoxyribonucleotide)m = (deoxyribonucleotide)n+m + AMP + beta-nicotinamide D-nucleotide.. Its function is as follows. DNA ligase that catalyzes the formation of phosphodiester linkages between 5'-phosphoryl and 3'-hydroxyl groups in double-stranded DNA using NAD as a coenzyme and as the energy source for the reaction. It is essential for DNA replication and repair of damaged DNA. This is DNA ligase from Campylobacter concisus (strain 13826).